The chain runs to 227 residues: Eukaryotic translation initiation factor 4E-1 (227 aa).

Residues 1–52 (MAEEHETRPPSAGRPPSSGRGRADDADEREEGEIADDDSGHAPPQANPAAPH) are disordered. Positions 9–20 (PPSAGRPPSSGR) are enriched in low complexity. Over residues 25–37 (DADEREEGEIADD) the composition is skewed to acidic residues. 2 EIF4G-binding regions span residues 52 to 55 (HPLE) and 62 to 98 (FDNP…NNIH). MRNA-binding positions include 70–75 (KQATWG), lysine 102, and 120–121 (WE). A disulfide bridge links cysteine 125 with cysteine 163. Residues 146 to 155 (HTLLAMIGEQ) form an EIF4G-binding region. MRNA is bound by residues 170-175 (RGKQER) and 215-219 (KKMDK).

This sequence belongs to the eukaryotic initiation factor 4E family. EIF4F is a multi-subunit complex, the composition of which varies with external and internal environmental conditions. It is composed of at least EIF4A, EIF4E and EIF4G. EIF4E is also known to interact with other partners. In higher plants two isoforms of EIF4F have been identified, named isoform EIF4F and isoform EIF(iso)4F. Isoform EIF4F has subunits p220 and p26, whereas isoform EIF(iso)4F has subunits p82 and p28. According to the redox status, the Cys-125-Cys-163 disulfide bridge may have a role in regulating protein function by affecting its ability to bind capped mRNA.

It is found in the nucleus. Its subcellular location is the cytoplasm. Functionally, component of the protein complex eIF4F, which is involved in the recognition of the mRNA cap, ATP-dependent unwinding of 5'-terminal secondary structure and recruitment of mRNA to the ribosome. Recognizes and binds the 7-methylguanosine-containing mRNA cap during an early step in the initiation of protein synthesis and facilitates ribosome binding by inducing the unwinding of the mRNAs secondary structures. This is Eukaryotic translation initiation factor 4E-1 from Oryza sativa subsp. japonica (Rice).